The primary structure comprises 336 residues: Eukaryotic translation initiation factor 3 subunit H (336 aa).

Residues 21–154 (VQCDGLAAMK…LKAYRLTPQA (134 aa)) enclose the MPN domain.

The protein belongs to the eIF-3 subunit H family. In terms of assembly, component of the eukaryotic translation initiation factor 3 (eIF-3) complex.

The protein resides in the cytoplasm. Its function is as follows. Component of the eukaryotic translation initiation factor 3 (eIF-3) complex, which is involved in protein synthesis of a specialized repertoire of mRNAs and, together with other initiation factors, stimulates binding of mRNA and methionyl-tRNAi to the 40S ribosome. The eIF-3 complex specifically targets and initiates translation of a subset of mRNAs involved in cell proliferation. The polypeptide is Eukaryotic translation initiation factor 3 subunit H (Aedes aegypti (Yellowfever mosquito)).